The primary structure comprises 552 residues: Dihydroxy-acid dehydratase (552 aa).

C46 is a [2Fe-2S] cluster binding site. D78 is a Mg(2+) binding site. C119 is a [2Fe-2S] cluster binding site. Residues D120 and K121 each contribute to the Mg(2+) site. The residue at position 121 (K121) is an N6-carboxylysine. Residue C191 participates in [2Fe-2S] cluster binding. Position 442 (E442) interacts with Mg(2+). S468 (proton acceptor) is an active-site residue.

The protein belongs to the IlvD/Edd family. In terms of assembly, homodimer. Requires [2Fe-2S] cluster as cofactor. Mg(2+) is required as a cofactor.

The catalysed reaction is (2R)-2,3-dihydroxy-3-methylbutanoate = 3-methyl-2-oxobutanoate + H2O. It catalyses the reaction (2R,3R)-2,3-dihydroxy-3-methylpentanoate = (S)-3-methyl-2-oxopentanoate + H2O. It functions in the pathway amino-acid biosynthesis; L-isoleucine biosynthesis; L-isoleucine from 2-oxobutanoate: step 3/4. Its pathway is amino-acid biosynthesis; L-valine biosynthesis; L-valine from pyruvate: step 3/4. In terms of biological role, functions in the biosynthesis of branched-chain amino acids. Catalyzes the dehydration of (2R,3R)-2,3-dihydroxy-3-methylpentanoate (2,3-dihydroxy-3-methylvalerate) into 2-oxo-3-methylpentanoate (2-oxo-3-methylvalerate) and of (2R)-2,3-dihydroxy-3-methylbutanoate (2,3-dihydroxyisovalerate) into 2-oxo-3-methylbutanoate (2-oxoisovalerate), the penultimate precursor to L-isoleucine and L-valine, respectively. The polypeptide is Dihydroxy-acid dehydratase (Picrophilus torridus (strain ATCC 700027 / DSM 9790 / JCM 10055 / NBRC 100828 / KAW 2/3)).